Here is a 326-residue protein sequence, read N- to C-terminus: o-succinylbenzoate synthase (326 aa).

The Proton donor role is filled by Lys-110. Positions 138, 165, and 188 each coordinate Mg(2+). Lys-212 acts as the Proton acceptor in catalysis.

It belongs to the mandelate racemase/muconate lactonizing enzyme family. MenC type 1 subfamily. It depends on a divalent metal cation as a cofactor.

The catalysed reaction is (1R,6R)-6-hydroxy-2-succinyl-cyclohexa-2,4-diene-1-carboxylate = 2-succinylbenzoate + H2O. It functions in the pathway quinol/quinone metabolism; 1,4-dihydroxy-2-naphthoate biosynthesis; 1,4-dihydroxy-2-naphthoate from chorismate: step 4/7. Its pathway is quinol/quinone metabolism; menaquinone biosynthesis. Converts 2-succinyl-6-hydroxy-2,4-cyclohexadiene-1-carboxylate (SHCHC) to 2-succinylbenzoate (OSB). The sequence is that of o-succinylbenzoate synthase from Mycobacterium bovis (strain ATCC BAA-935 / AF2122/97).